The following is a 631-amino-acid chain: Mini-chromosome maintenance complex-binding protein (631 aa).

2 stretches are compositionally biased toward polar residues: residues 148 to 157 and 173 to 192; these read ARVVPSTSYV and TQCQQTKDISQGAQSSSESH. The disordered stretch occupies residues 148–218; sequence ARVVPSTSYV…SSSSHCTSSL (71 aa). Positions 193 to 202 are enriched in basic and acidic residues; sequence GNTEPKRQET. Residues 206–217 are compositionally biased toward low complexity; that stretch reads SQDSSSSHCTSS.

It belongs to the MCMBP family. As to quaternary structure, interacts with the mcm complex: associates with the mcm3-7 complex which lacks mcm2, while it does not interact with the mcm complex when mcm2 is present (mcm2-7 complex).

It is found in the nucleus. Its function is as follows. Associated component of the mcm complex that acts as a regulator of DNA replication. Binds to the MCM complex during late S phase and promotes the disassembly of the mcm complex from chromatin, thereby acting as a key regulator of pre-replication complex (pre-RC) unloading from replicated DNA. Can dissociate the mcm complex without addition of ATP; probably acts by destabilizing interactions of each individual subunits of the mcm complex. Required for sister chromatid cohesion. The protein is Mini-chromosome maintenance complex-binding protein (mcmbp) of Danio rerio (Zebrafish).